The primary structure comprises 1892 residues: Sodium channel protein type 4 subunit alpha A (1892 aa).

The Cytoplasmic portion of the chain corresponds to 1–125 (MATILPPPGT…RGAIKILIHS (125 aa)). A disordered region spans residues 34 to 54 (APKAGAHEEEEPPTPNPDLEA). Residues 107-433 (ILSPFSLVRR…VVAMAYDEQN (327 aa)) form an I repeat. Residues 126–144 (LFSTLIMITILSNCVFMTM) traverse the membrane as a helical segment. Residues 145 to 151 (SNPPAWS) lie on the Extracellular side of the membrane. The helical transmembrane segment at 152 to 172 (KTVEYVFTGIYTFEATVKVLS) threads the bilayer. The Cytoplasmic portion of the chain corresponds to 173–186 (RGFCVGPFTFLRDP). The chain crosses the membrane as a helical span at residues 187 to 204 (WNWLDFMVISMAYITEFV). The Extracellular segment spans residues 205-210 (DLGNVS). Residue Asn-208 is glycosylated (N-linked (GlcNAc...) asparagine). A helical membrane pass occupies residues 211-227 (ALRTFRVLRALKTITVI). The Cytoplasmic segment spans residues 228–246 (PGLKTIVAALIQSVKKMVD). A helical membrane pass occupies residues 247–266 (VMILTVFALAVFALVGLQLF). Residues 267–370 (MGNLRHKCIR…PNYGYTSFDS (104 aa)) lie on the Extracellular side of the membrane. An intrachain disulfide couples Cys-274 to Cys-339. N-linked (GlcNAc...) asparagine glycans are attached at residues Asn-281, Asn-294, and Asn-341. Cys-348 and Cys-354 form a disulfide bridge. The segment at residues 371 to 395 (FGWAFLALFRLMTQDNWESLFQLTL) is an intramembrane region (pore-forming). Over 396–402 (RAAGQTY) the chain is Extracellular. A helical membrane pass occupies residues 403 to 423 (MLFFVVVIFLGSFYLINLILA). The Cytoplasmic portion of the chain corresponds to 424–612 (VVAMAYDEQN…KWVHFVVMDP (189 aa)). Residues 594-866 (CCEKWVVFKK…QIAIGRITRG (273 aa)) form an II repeat. A helical transmembrane segment spans residues 613 to 631 (FVDLAITICIVLNTLFMAM). At 632-642 (EHYPMTEEFDY) the chain is on the extracellular side. A helical membrane pass occupies residues 643-662 (MLSVGNLVFTGIFAAEMFFK). Residues 663-676 (LIAMDPYYYFQVGW) lie on the Cytoplasmic side of the membrane. Residues 677 to 696 (NIFDSIIVTLSLVELGLANV) traverse the membrane as a helical segment. At 697–698 (QG) the chain is on the extracellular side. The chain crosses the membrane as a helical span at residues 699–716 (LSVLRSFRLLRVFKLAKS). The Cytoplasmic segment spans residues 717–732 (WPTLNMLIKIIGNSVG). The chain crosses the membrane as a helical span at residues 733-751 (ALGNLTLVLAIIVFIFAVV). Over 752 to 780 (GMQLFGKSYKDCVCKISSDCELPRWHMND) the chain is Extracellular. A disulfide bridge links Cys-765 with Cys-771. An intramembrane region (pore-forming) is located at residues 781 to 801 (FFHSFLIVFRILCGEWIETMW). Over 802–812 (DCMEVAGAGMC) the chain is Extracellular. Cys-803 and Cys-812 form a disulfide bridge. The helical transmembrane segment at 813 to 831 (LVVFMMVMVIGNLVVLNLF) threads the bilayer. Over 832–1071 (LALLLSSFSG…TCFTIVEHDW (240 aa)) the chain is Cytoplasmic. Disordered stretches follow at residues 884 to 905 (REPQ…TEGM) and 945 to 982 (LGES…GVED). The span at 948–971 (SDSENPSEDDDDQEDDVDSEVTCE) shows a compositional bias: acidic residues. One copy of the III repeat lies at 1052–1366 (KGKKWWNLRK…KKYYEAMKKL (315 aa)). A helical membrane pass occupies residues 1072–1089 (FETFIIFMILLSSGALAF). Topologically, residues 1090–1102 (EDIYIERRRTVKI) are extracellular. Residues 1103 to 1121 (VLEFADKVFTFIFVIEMLL) form a helical membrane-spanning segment. Over 1122–1135 (KWVAYGFKTYFTNA) the chain is Cytoplasmic. A helical membrane pass occupies residues 1136-1154 (WCWLDFFIVDISLISLSAN). Residues 1155 to 1162 (LMGFSDLG) lie on the Extracellular side of the membrane. Residues 1163–1181 (PIKSLRTLRALRPLRALSR) traverse the membrane as a helical segment. The Cytoplasmic portion of the chain corresponds to 1182–1198 (FEGMRVVVNALIGAIPS). A helical membrane pass occupies residues 1199 to 1218 (IFNVLLVCLIFWLIFSIMGV). Over 1219–1270 (NLFAGKFYRCINTTTAELFPISVVNNKSDCVALQEATQEARWVNVKVNYDNV) the chain is Extracellular. A disulfide bond links Cys-1228 and Cys-1248. Asn-1230 and Asn-1244 each carry an N-linked (GlcNAc...) asparagine glycan. The pore-forming intramembrane region spans 1271-1292 (AKGYLSLLQIATFKGWMDIMYP). Residues 1293–1309 (AVDSREVEEQPSYEINL) are Extracellular-facing. Residues 1310–1331 (YMYIYFVIFIIFGSFFTLNLFI) traverse the membrane as a helical segment. The Cytoplasmic portion of the chain corresponds to 1332-1394 (GVIIDNFNQQ…LVFDFISQQF (63 aa)). Residues 1350 to 1352 (IFM) form an important for rapid channel inactivation region. Residues 1375–1673 (IPRPANLIQG…WEKFDTGGTQ (299 aa)) form an IV repeat. A helical transmembrane segment spans residues 1395-1412 (FDIFIMVLICLNMVTMMV). At 1413 to 1423 (ETDDQSPAKED) the chain is on the extracellular side. The chain crosses the membrane as a helical span at residues 1424 to 1442 (FLFKVNVAFIVVFTGECTL). Residues 1443 to 1454 (KLFALRHYFFTN) lie on the Cytoplasmic side of the membrane. A helical membrane pass occupies residues 1455-1472 (GWNIFDFIVVILSIAGTM). Over 1473-1485 (LSDIIEKYFVSPT) the chain is Extracellular. Residues 1486-1502 (LFRVIRLARIGRILRLI) form a helical membrane-spanning segment. The Cytoplasmic segment spans residues 1503 to 1521 (KGARGIRTLLFALMMSLPA). The chain crosses the membrane as a helical span at residues 1522 to 1539 (LFNIGLLLFLIMFIFSIF). The Extracellular portion of the chain corresponds to 1540–1561 (GMSNFAYVKKEAGINDMFNFET). Residues 1562–1584 (FGSSIICLFQITTSAGWDTLLLP) constitute an intramembrane region (pore-forming). At 1585-1614 (MLNKEPPDCDPAFENPGTDVKGNCGNPMMG) the chain is on the extracellular side. Cys-1593 and Cys-1608 are disulfide-bonded. Residues 1615-1637 (MVFFCSYIIISFLVVVNMYIAII) traverse the membrane as a helical segment. Residues 1638–1892 (LENFNVAQEE…TQTILRETNV (255 aa)) lie on the Cytoplasmic side of the membrane. An IQ domain is found at 1767–1796 (EDMAAVVIQRAYRNHLHKRGIHHAAYIQRS). Positions 1836–1856 (RRRPDPQTRCSGARCSPEPPE) are disordered.

The protein belongs to the sodium channel (TC 1.A.1.10) family. Nav1.4/SCN4A subfamily. Voltage-gated sodium (Nav) channels consist of an ion-conducting alpha subunit which is functional on its own associated with regulatory beta subunits.

The protein resides in the cell membrane. The enzyme catalyses Na(+)(in) = Na(+)(out). Pore-forming subunit of a voltage-gated sodium (Nav) channel that directly mediates the depolarizing phase of action potentials in excitable membranes. Navs, also called VGSCs (voltage-gated sodium channels) or VDSCs (voltage-dependent sodium channels), operate by switching between closed and open conformations depending on the voltage difference across the membrane. In the open conformation they allow Na(+) ions to selectively pass through the pore, along their electrochemical gradient. The influx of Na+ ions provokes membrane depolarization, initiating the propagation of electrical signals throughout cells and tissues. This is Sodium channel protein type 4 subunit alpha A (scn4aa) from Takifugu rubripes (Japanese pufferfish).